We begin with the raw amino-acid sequence, 243 residues long: Tryptophan synthase alpha chain (243 aa).

Catalysis depends on proton acceptor residues E31 and D42.

Belongs to the TrpA family. As to quaternary structure, tetramer of two alpha and two beta chains.

It catalyses the reaction (1S,2R)-1-C-(indol-3-yl)glycerol 3-phosphate + L-serine = D-glyceraldehyde 3-phosphate + L-tryptophan + H2O. Its pathway is amino-acid biosynthesis; L-tryptophan biosynthesis; L-tryptophan from chorismate: step 5/5. Functionally, the alpha subunit is responsible for the aldol cleavage of indoleglycerol phosphate to indole and glyceraldehyde 3-phosphate. The polypeptide is Tryptophan synthase alpha chain (Staphylococcus epidermidis (strain ATCC 35984 / DSM 28319 / BCRC 17069 / CCUG 31568 / BM 3577 / RP62A)).